Here is a 224-residue protein sequence, read N- to C-terminus: Transcriptional regulatory protein CiaR (224 aa).

Residues 3-116 form the Response regulatory domain; sequence KILLVEDDLG…ELKMRIQALL (114 aa). At Asp-51 the chain carries 4-aspartylphosphate. The ompR/PhoB-type DNA-binding region spans 124-222; that stretch reads ENTLTYGNIV…LRSVGYLLKD (99 aa).

In terms of processing, phosphorylated by CiaH.

The protein localises to the cytoplasm. Member of the two-component regulatory system CiaH/CiaR. Involved in early steps of competence regulation and in penicillin susceptibility. The polypeptide is Transcriptional regulatory protein CiaR (ciaR) (Streptococcus pneumoniae (strain ATCC BAA-255 / R6)).